The following is a 357-amino-acid chain: 5-hydroxytryptamine receptor 5A (357 aa).

The Extracellular portion of the chain corresponds to 1–36 (MDLPVNLTSFSLSTPSPLETNHSLGKDDLRPSSPLL). 2 N-linked (GlcNAc...) asparagine glycosylation sites follow: Asn-6 and Asn-21. The chain crosses the membrane as a helical span at residues 37–63 (SVFGVLILTLLGFLVAATFAWNLLVLA). Residues 64–76 (TILRVRTFHRVPH) lie on the Cytoplasmic side of the membrane. A helical transmembrane segment spans residues 77–103 (NLVASMAVSDVLVAALVMPLSLVHELS). Over 104–114 (GRRWQLGRRLC) the chain is Extracellular. Cys-114 and Cys-192 form a disulfide bridge. Residues 115-137 (QLWIACDVLCCTASIWNVTAIAL) form a helical membrane-spanning segment. Position 121 (Asp-121) interacts with serotonin. Over 138–155 (DRYWSITRHMEYTLRTRK) the chain is Cytoplasmic. Residues 156–176 (CVSNVMIALTWALSAVISLAP) traverse the membrane as a helical segment. The Extracellular segment spans residues 177–198 (LLFGWGETYSEGSEECQVSREP). A helical transmembrane segment spans residues 199-220 (SYAVFSTVGAFYLPLCVVLFVY). Residues 221–287 (WKIYKAAKFR…QKEQRAALMV (67 aa)) lie on the Cytoplasmic side of the membrane. The helical transmembrane segment at 288–312 (GILIGVFVLCWIPFFLTELISPLCS) threads the bilayer. Residues 313–314 (CD) lie on the Extracellular side of the membrane. Residues 315 to 339 (IPAIWKSIFLWLGYSNSFFNPLIYT) traverse the membrane as a helical segment. The Cytoplasmic segment spans residues 340 to 357 (AFNKNYNSAFKNFFSRQH).

It belongs to the G-protein coupled receptor 1 family.

The protein localises to the cell membrane. Functionally, G-protein coupled receptor for 5-hydroxytryptamine (serotonin), a biogenic hormone that functions as a neurotransmitter, a hormone and a mitogen. Also functions as a receptor for ergot alkaloid derivatives and other psychoactive substances. Ligand binding causes a conformation change that triggers signaling via guanine nucleotide-binding proteins (G proteins) and modulates the activity of downstream effectors. HTR5A is coupled to G(i)/G(o) G alpha proteins and mediates inhibitory neurotransmission: signaling inhibits adenylate cyclase activity and activates a phosphatidylinositol-calcium second messenger system that regulates the release of Ca(2+) ions from intracellular stores. This Homo sapiens (Human) protein is 5-hydroxytryptamine receptor 5A.